Here is a 110-residue protein sequence, read N- to C-terminus: Iron-sulfur cluster assembly protein CyaY (110 aa).

It belongs to the frataxin family.

Functionally, involved in iron-sulfur (Fe-S) cluster assembly. May act as a regulator of Fe-S biogenesis. The polypeptide is Iron-sulfur cluster assembly protein CyaY (Pseudomonas putida (strain W619)).